Reading from the N-terminus, the 156-residue chain is Small ribosomal subunit protein uS7c (156 aa).

This sequence belongs to the universal ribosomal protein uS7 family. In terms of assembly, part of the 30S ribosomal subunit.

Its subcellular location is the plastid. The protein localises to the chloroplast. In terms of biological role, one of the primary rRNA binding proteins, it binds directly to 16S rRNA where it nucleates assembly of the head domain of the 30S subunit. The polypeptide is Small ribosomal subunit protein uS7c (rps7) (Thalassiosira pseudonana (Marine diatom)).